Reading from the N-terminus, the 418-residue chain is Serine hydroxymethyltransferase (418 aa).

(6S)-5,6,7,8-tetrahydrofolate contacts are provided by residues L121 and 125–127 (GHL). K230 is subject to N6-(pyridoxal phosphate)lysine. 355-357 (SPF) is a (6S)-5,6,7,8-tetrahydrofolate binding site.

This sequence belongs to the SHMT family. As to quaternary structure, homodimer. It depends on pyridoxal 5'-phosphate as a cofactor.

The protein resides in the cytoplasm. It catalyses the reaction (6R)-5,10-methylene-5,6,7,8-tetrahydrofolate + glycine + H2O = (6S)-5,6,7,8-tetrahydrofolate + L-serine. Its pathway is one-carbon metabolism; tetrahydrofolate interconversion. It functions in the pathway amino-acid biosynthesis; glycine biosynthesis; glycine from L-serine: step 1/1. Functionally, catalyzes the reversible interconversion of serine and glycine with tetrahydrofolate (THF) serving as the one-carbon carrier. This reaction serves as the major source of one-carbon groups required for the biosynthesis of purines, thymidylate, methionine, and other important biomolecules. Also exhibits THF-independent aldolase activity toward beta-hydroxyamino acids, producing glycine and aldehydes, via a retro-aldol mechanism. This Streptococcus pyogenes serotype M49 (strain NZ131) protein is Serine hydroxymethyltransferase.